The chain runs to 248 residues: UPF0736 protein BT9727_1080 (248 aa).

The protein belongs to the UPF0736 family.

This is UPF0736 protein BT9727_1080 from Bacillus thuringiensis subsp. konkukian (strain 97-27).